The primary structure comprises 151 residues: Caveolin-3 (151 aa).

At 1-83 (MMAEERTDLE…RLLSTLLGVP (83 aa)) the chain is on the cytoplasmic side. Residue K38 forms a Glycyl lysine isopeptide (Lys-Gly) (interchain with G-Cter in SUMO3) linkage. Positions 64–114 (TFTVSKYWCYRLLSTLLGVPLALLWGFLFACISFCHIWAVVPCIKSYLIEI) are required for interaction with DAG1. The segment at residues 84-104 (LALLWGFLFACISFCHIWAVV) is an intramembrane region (helical). Over 105–151 (PCIKSYLIEIQCISHIYSLCIRTFCNPVFAALGQVCSNIKVMLRKEV) the chain is Cytoplasmic.

It belongs to the caveolin family. Homooligomer. Interacts with DYSF. Interacts with DLG1 and KCNA5; forms a ternary complex. Interacts with DAG1 (via its C-terminal); the interaction prevents binding of DAG1 with DMD. Interacts with TRIM72. Interacts with MUSK; may regulate MUSK signaling. Interacts with POPDC1. Interacts with CAVIN1, CAVIN2 and CAVIN4. Post-translationally, sumoylation with SUMO3 by PIAS4 may reduce agonist-induced internalization and desensitization of adrenergic receptor ABRD2. As to expression, expressed specifically in skeletal muscle and heart.

The protein resides in the golgi apparatus membrane. It is found in the cell membrane. The protein localises to the membrane. It localises to the caveola. Its subcellular location is the sarcolemma. In terms of biological role, may act as a scaffolding protein within caveolar membranes. Interacts directly with G-protein alpha subunits and can functionally regulate their activity. May also regulate voltage-gated potassium channels. Plays a role in the sarcolemma repair mechanism of both skeletal muscle and cardiomyocytes that permits rapid resealing of membranes disrupted by mechanical stress. Mediates the recruitment of CAVIN2 and CAVIN3 proteins to the caveolae. This is Caveolin-3 (CAV3) from Sus scrofa (Pig).